The chain runs to 323 residues: Beta-ketoacyl-[acyl-carrier-protein] synthase III (323 aa).

Catalysis depends on residues Cys113 and His250. Residues Gln251–Arg255 are ACP-binding. Residue Asn280 is part of the active site.

It belongs to the thiolase-like superfamily. FabH family. As to quaternary structure, homodimer.

Its subcellular location is the cytoplasm. The enzyme catalyses malonyl-[ACP] + acetyl-CoA + H(+) = 3-oxobutanoyl-[ACP] + CO2 + CoA. It functions in the pathway lipid metabolism; fatty acid biosynthesis. In terms of biological role, catalyzes the condensation reaction of fatty acid synthesis by the addition to an acyl acceptor of two carbons from malonyl-ACP. Catalyzes the first condensation reaction which initiates fatty acid synthesis and may therefore play a role in governing the total rate of fatty acid production. Possesses both acetoacetyl-ACP synthase and acetyl transacylase activities. Its substrate specificity determines the biosynthesis of branched-chain and/or straight-chain of fatty acids. The chain is Beta-ketoacyl-[acyl-carrier-protein] synthase III from Sinorhizobium medicae (strain WSM419) (Ensifer medicae).